The sequence spans 400 residues: Queuine tRNA-ribosyltransferase (400 aa).

Aspartate 93 functions as the Proton acceptor in the catalytic mechanism. Substrate contacts are provided by residues aspartate 93–phenylalanine 97, aspartate 166, and glycine 247. The interval glycine 277–aspartate 283 is RNA binding. Aspartate 296 serves as the catalytic Nucleophile. An RNA binding; important for wobble base 34 recognition region spans residues threonine 301–arginine 305. Cysteine 338, cysteine 340, cysteine 343, and histidine 369 together coordinate Zn(2+).

It belongs to the queuine tRNA-ribosyltransferase family. As to quaternary structure, homodimer. Within each dimer, one monomer is responsible for RNA recognition and catalysis, while the other monomer binds to the replacement base PreQ1. Requires Zn(2+) as cofactor.

It carries out the reaction 7-aminomethyl-7-carbaguanine + guanosine(34) in tRNA = 7-aminomethyl-7-carbaguanosine(34) in tRNA + guanine. Its pathway is tRNA modification; tRNA-queuosine biosynthesis. Its function is as follows. Catalyzes the base-exchange of a guanine (G) residue with the queuine precursor 7-aminomethyl-7-deazaguanine (PreQ1) at position 34 (anticodon wobble position) in tRNAs with GU(N) anticodons (tRNA-Asp, -Asn, -His and -Tyr). Catalysis occurs through a double-displacement mechanism. The nucleophile active site attacks the C1' of nucleotide 34 to detach the guanine base from the RNA, forming a covalent enzyme-RNA intermediate. The proton acceptor active site deprotonates the incoming PreQ1, allowing a nucleophilic attack on the C1' of the ribose to form the product. After dissociation, two additional enzymatic reactions on the tRNA convert PreQ1 to queuine (Q), resulting in the hypermodified nucleoside queuosine (7-(((4,5-cis-dihydroxy-2-cyclopenten-1-yl)amino)methyl)-7-deazaguanosine). This chain is Queuine tRNA-ribosyltransferase, found in Roseiflexus sp. (strain RS-1).